Reading from the N-terminus, the 540-residue chain is Maintenance of mitochondrial morphology protein 1 (540 aa).

Over 1-25 (MAGPSNQTQPPPPVLTQPSLSFTQG) the chain is Lumenal. Residues 26–46 (LLVGQLSVVLLIGAFIKFFIF) form a helical membrane-spanning segment. The Cytoplasmic portion of the chain corresponds to 47 to 540 (GEAPPHPSRN…GSMPDPVVVT (494 aa)). Disordered stretches follow at residues 52–135 (HPSR…SHQP), 275–331 (GPGT…ATAA), 416–471 (GRTG…GGSM), and 509–540 (YGGAQGGGGGGGRGGEEQFAIPGSMPDPVVVT). 3 stretches are compositionally biased toward polar residues: residues 69 to 81 (YSLNSISADSSPR), 88 to 105 (STSNILRPVPSSSTNTRS), and 112 to 121 (YSATPTNPTS). Basic residues predominate over residues 122–132 (KHSRSRPHHSS). Residues 134–409 (QPESLDWFNV…EPRVQVVGLP (276 aa)) enclose the SMP-LTD domain. The span at 321 to 331 (TNTNTAGATAA) shows a compositional bias: low complexity. Gly residues-rich tracts occupy residues 442–471 (TAGGDGVGVRGGGGGGGGGGGVGGSGGGSM) and 511–521 (GAQGGGGGGGR).

Belongs to the MMM1 family. Homodimer. Component of the ER-mitochondria encounter structure (ERMES) or MDM complex, composed of MMM1, MDM10, MDM12 and MDM34. An MMM1 homodimer associates with one molecule of MDM12 on each side in a pairwise head-to-tail manner, and the SMP-LTD domains of MMM1 and MDM12 generate a continuous hydrophobic tunnel for phospholipid trafficking.

It is found in the endoplasmic reticulum membrane. Functionally, component of the ERMES/MDM complex, which serves as a molecular tether to connect the endoplasmic reticulum (ER) and mitochondria. Components of this complex are involved in the control of mitochondrial shape and protein biogenesis, and function in nonvesicular lipid trafficking between the ER and mitochondria. The MDM12-MMM1 subcomplex functions in the major beta-barrel assembly pathway that is responsible for biogenesis of all outer membrane beta-barrel proteins, and acts in a late step after the SAM complex. The MDM10-MDM12-MMM1 subcomplex further acts in the TOM40-specific pathway after the action of the MDM12-MMM1 complex. Essential for establishing and maintaining the structure of mitochondria and maintenance of mtDNA nucleoids. This chain is Maintenance of mitochondrial morphology protein 1, found in Blastomyces gilchristii (strain SLH14081) (Blastomyces dermatitidis).